Reading from the N-terminus, the 550-residue chain is MAGKEIKYSTKAREAMLAGVRTLADAVAVTLGPRGRNVVIEKSWGSPTVTKDGVTVAKEIELEDKFENMGAQMVKEVASKTSDTAGDGTTTATVLARAIYEEGQKLVAAGNNPMAIKRGIDKACEVAVKELAGMSKPTKNQREIAQVGTISANSDETIGNIIAEAMEKVGKEGVITVEEAKSMDTTLDVVEGMQFDRGYLSPYFVTDAEKMVVSLENAYILINEKKLSNMKELLPILEQTAKAGRPLLIIAEDIEGEALATLVVNKLRGTLNVAAVKAPGFGDRRKAMLEDIATLTGGQVVSEDVGINLEGITLGDLGHAKRITIDKDNTTIVDGAGKKADIEGRVKQIRAQIEDTTSDYDREKLQERLAKLVGGVAVINVGAATETEMKEKKARVEDALNATRAAVEEGVLPGGGVALVRCLDALSKIKIKSEEKLGVKVVMRAIEEPLRRIANNAGVEGSVVIEKVKNETGSFGYNAATGDYGDLIAAGVIDPTKVVRFALQNACSVASVMLTTEAMIAEKPSKEEPAAMPGGGMGGMGGMGGMGGMM.

Residues Thr-30–Pro-33, Lys-51, Asp-87–Thr-91, Gly-415, Asn-478–Ala-480, and Asp-494 each bind ATP.

This sequence belongs to the chaperonin (HSP60) family. Forms a cylinder of 14 subunits composed of two heptameric rings stacked back-to-back. Interacts with the co-chaperonin GroES.

The protein localises to the cytoplasm. The catalysed reaction is ATP + H2O + a folded polypeptide = ADP + phosphate + an unfolded polypeptide.. Functionally, together with its co-chaperonin GroES, plays an essential role in assisting protein folding. The GroEL-GroES system forms a nano-cage that allows encapsulation of the non-native substrate proteins and provides a physical environment optimized to promote and accelerate protein folding. The sequence is that of Chaperonin GroEL from Desulfosudis oleivorans (strain DSM 6200 / JCM 39069 / Hxd3) (Desulfococcus oleovorans).